The sequence spans 335 residues: ADP-L-glycero-D-manno-heptose-6-epimerase (335 aa).

NADP(+)-binding positions include 11-12 (FI), 32-33 (DD), Lys-39, 75-79 (EGACS), and Asn-92. The active-site Proton acceptor is Tyr-139. NADP(+) is bound at residue Lys-143. Asn-172 is a binding site for substrate. Residues Val-173 and Lys-181 each contribute to the NADP(+) site. Lys-181 functions as the Proton acceptor in the catalytic mechanism. Substrate is bound by residues Arg-183, His-190, 204–207 (FGDY), Arg-217, and Tyr-296.

This sequence belongs to the NAD(P)-dependent epimerase/dehydratase family. HldD subfamily. As to quaternary structure, homopentamer. Requires NADP(+) as cofactor.

The catalysed reaction is ADP-D-glycero-beta-D-manno-heptose = ADP-L-glycero-beta-D-manno-heptose. It functions in the pathway nucleotide-sugar biosynthesis; ADP-L-glycero-beta-D-manno-heptose biosynthesis; ADP-L-glycero-beta-D-manno-heptose from D-glycero-beta-D-manno-heptose 7-phosphate: step 4/4. Functionally, catalyzes the interconversion between ADP-D-glycero-beta-D-manno-heptose and ADP-L-glycero-beta-D-manno-heptose via an epimerization at carbon 6 of the heptose. This is ADP-L-glycero-D-manno-heptose-6-epimerase from Polaromonas naphthalenivorans (strain CJ2).